A 547-amino-acid polypeptide reads, in one-letter code: Chaperonin GroEL 1 (547 aa).

ATP-binding positions include 30–33, lysine 51, 87–91, glycine 415, and aspartate 496; these read TLGP and DGTTT.

Belongs to the chaperonin (HSP60) family. As to quaternary structure, forms a cylinder of 14 subunits composed of two heptameric rings stacked back-to-back. Interacts with the co-chaperonin GroES.

The protein resides in the cytoplasm. The enzyme catalyses ATP + H2O + a folded polypeptide = ADP + phosphate + an unfolded polypeptide.. Functionally, together with its co-chaperonin GroES, plays an essential role in assisting protein folding. The GroEL-GroES system forms a nano-cage that allows encapsulation of the non-native substrate proteins and provides a physical environment optimized to promote and accelerate protein folding. This chain is Chaperonin GroEL 1, found in Rhodopseudomonas palustris (strain BisB18).